Reading from the N-terminus, the 574-residue chain is Glucose-6-phosphate 1-dehydrogenase, chloroplastic (574 aa).

NADP(+)-binding positions include 93 to 100 and Arg-127; that span reads GASGDLAK. A disulfide bridge links Cys-145 with Cys-153. Lys-230 lines the NADP(+) pocket. D-glucose 6-phosphate contacts are provided by residues Lys-230, 260–264, Glu-298, and Asp-317; that span reads HYLGK. Catalysis depends on His-322, which acts as the Proton acceptor. Residue Lys-415 coordinates NADP(+). D-glucose 6-phosphate-binding residues include Lys-418 and Lys-423. The NADP(+) site is built by Arg-424, Arg-428, and Arg-457. Gln-459 is a D-glucose 6-phosphate binding site. Residues 465-467 and Arg-550 contribute to the NADP(+) site; that span reads YLK.

It belongs to the glucose-6-phosphate dehydrogenase family. In terms of assembly, homodimer.

The protein localises to the plastid. The protein resides in the chloroplast. The catalysed reaction is D-glucose 6-phosphate + NADP(+) = 6-phospho-D-glucono-1,5-lactone + NADPH + H(+). It functions in the pathway carbohydrate degradation; pentose phosphate pathway; D-ribulose 5-phosphate from D-glucose 6-phosphate (oxidative stage): step 1/3. With respect to regulation, regulated by metabolites. Post-translationally inactivated by cysteine-mediated redox modification via the ferredoxin-thioredoxin system in the light and this avoids futile cycles with photosynthetic CO2 fixation. Its function is as follows. Catalyzes the rate-limiting step of the oxidative pentose-phosphate pathway, which represents a route for the dissimilation of carbohydrates besides glycolysis. The main function of this enzyme is to provide reducing power (NADPH) and pentose phosphates for fatty acid and nucleic acid synthesis which are involved in membrane synthesis and cell division. This Spinacia oleracea (Spinach) protein is Glucose-6-phosphate 1-dehydrogenase, chloroplastic (G6PD).